A 485-amino-acid polypeptide reads, in one-letter code: Adenosylhomocysteinase (485 aa).

Substrate-binding residues include Thr-64, Asp-139, and Glu-205. NAD(+) is bound at residue 206-208; sequence TTT. The substrate site is built by Lys-235 and Asp-239. NAD(+) is bound by residues Asn-240, 269-274, Glu-292, Asn-327, 348-350, and Asn-397; these read GYGDVG and IGH.

This sequence belongs to the adenosylhomocysteinase family. NAD(+) is required as a cofactor.

The enzyme catalyses S-adenosyl-L-homocysteine + H2O = L-homocysteine + adenosine. It participates in amino-acid biosynthesis; L-homocysteine biosynthesis; L-homocysteine from S-adenosyl-L-homocysteine: step 1/1. In terms of biological role, adenosylhomocysteine is a competitive inhibitor of S-adenosyl-L-methionine-dependent methyl transferase reactions; therefore adenosylhomocysteinase may play a key role in the control of methylations via regulation of the intracellular concentration of adenosylhomocysteine. The protein is Adenosylhomocysteinase (SAHH) of Solanum lycopersicum (Tomato).